The primary structure comprises 353 residues: UPF0283 membrane protein YcjF (353 aa).

Positions 1 to 19 are enriched in basic and acidic residues; sequence MSEPLKPRIDFAEPLKEEP. The interval 1–35 is disordered; it reads MSEPLKPRIDFAEPLKEEPTSAFKAQQTFSEAESR. The next 3 membrane-spanning stretches (helical) occupy residues 70-90, 100-120, and 213-233; these read MVMGGLALFGASVVGQGVQWT, VALGGCAAGALIVGAGVGSVV, and ESTLMIAVSPLALVDMAFIAW.

This sequence belongs to the UPF0283 family.

It localises to the cell inner membrane. The polypeptide is UPF0283 membrane protein YcjF (Salmonella paratyphi B (strain ATCC BAA-1250 / SPB7)).